A 68-amino-acid chain; its full sequence is uncharacterized protein (68 aa).

This is an uncharacterized protein from Dictyostelium discoideum (Social amoeba).